The primary structure comprises 399 residues: Subtilisin-like protease 4 (399 aa).

A signal peptide spans 1–19 (MVCLKTLSVFLAAFAVADA). Positions 20 to 118 (RAVFKTQSNK…VEQDQVVRIS (99 aa)) are excised as a propeptide. Positions 38–117 (YIVVMKDGVS…YVEQDQVVRI (80 aa)) constitute an Inhibitor I9 domain. Positions 128–399 (SWGLGRVSHR…NRLLYNGSGQ (272 aa)) constitute a Peptidase S8 domain. Active-site charge relay system residues include aspartate 160 and histidine 191. Asparagine 252 is a glycosylation site (N-linked (GlcNAc...) asparagine). The Charge relay system role is filled by serine 346. Positions 380 to 392 (AISNPGSGTTNRL) are enriched in polar residues. A disordered region spans residues 380–399 (AISNPGSGTTNRLLYNGSGQ). Residue asparagine 395 is glycosylated (N-linked (GlcNAc...) asparagine).

The protein belongs to the peptidase S8 family.

Its subcellular location is the secreted. Its function is as follows. Secreted subtilisin-like serine protease with keratinolytic activity that contributes to pathogenicity. In Arthroderma gypseum (strain ATCC MYA-4604 / CBS 118893) (Microsporum gypseum), this protein is Subtilisin-like protease 4 (SUB4).